The following is a 344-amino-acid chain: Selenide, water dikinase (344 aa).

Sec-16 is an active-site residue. Sec-16 is a non-standard amino acid (selenocysteine). ATP-binding positions include Lys-19 and Thr-46–Asp-48. Asp-49 lines the Mg(2+) pocket. ATP-binding positions include Asp-66, Asp-89, and Gly-135–Thr-137. Asp-89 lines the Mg(2+) pocket. Asp-223 serves as a coordination point for Mg(2+).

Belongs to the selenophosphate synthase 1 family. Class I subfamily. As to quaternary structure, homodimer. It depends on Mg(2+) as a cofactor.

The catalysed reaction is hydrogenselenide + ATP + H2O = selenophosphate + AMP + phosphate + 2 H(+). Its function is as follows. Synthesizes selenophosphate from selenide and ATP. The protein is Selenide, water dikinase of Caldanaerobacter subterraneus subsp. tengcongensis (strain DSM 15242 / JCM 11007 / NBRC 100824 / MB4) (Thermoanaerobacter tengcongensis).